The following is an 806-amino-acid chain: NADH:(hydroxy)cinnamate reductase subunit CrdB (806 aa).

Ser257 carries the post-translational modification FMN phosphoryl serine. Residues Ala310, Glu329, Asn337, Thr338, Gly342, Gly343, and Asp576 each coordinate FAD. The active-site Proton donor is the Arg635. FAD is bound by residues His742, Glu771, Ala786, and Leu787.

This sequence belongs to the FAD-dependent oxidoreductase 2 family. FRD/SDH subfamily. NADH:(hydroxy)cinnamate reductase Crd is a heterodimer composed of CrdA and CrdB subunits, encoded by adjacent genes. FAD is required as a cofactor. It depends on FMN as a cofactor. Is flavinylated on Ser-257 by ApbE, encoded in a neighboring gene. Covalent attachment of FMN is essential for catalytic activity.

It catalyses the reaction 3-phenylpropanoate + NAD(+) = (E)-cinnamate + NADH + H(+). The catalysed reaction is 3-(3,4-dihydroxyphenyl)propanoate + NAD(+) = (E)-caffeate + NADH + H(+). The enzyme catalyses phloretate + NAD(+) = (E)-4-coumarate + NADH + H(+). It carries out the reaction dihydroferulate + NAD(+) = (E)-ferulate + NADH + H(+). With respect to regulation, is inactivated by molecular oxygen, allowing regulation of Crd activity by medium oxygen level. Component of the NADH:(hydroxy)cinnamate reductase Crd that catalyzes the reduction of the double bond in cinnamate, p-coumarate, caffeate, and ferulate under anaerobic conditions with NADH or methyl viologen as the electron donor. Is moderately active against acrylate and practically inactive against urocanate, fumarate, methacrylate and crotonate. CrdB is the catalytic subunit that binds substrates. Is likely involved in protecting V.ruber from (hydroxy)cinnamate poisoning. The chain is NADH:(hydroxy)cinnamate reductase subunit CrdB from Vibrio ruber (strain DSM 16370 / JCM 11486 / BCRC 17186 / CECT 7878 / LMG 23124 / VR1).